Here is a 454-residue protein sequence, read N- to C-terminus: Probable ECA polymerase (454 aa).

The next 11 membrane-spanning stretches (helical) occupy residues 3–23 (LGQF…ILTL), 39–59 (FSML…MLVF), 61–81 (FGVA…ATAF), 119–139 (LALV…FLLF), 154–174 (GVAL…VYFL), 180–200 (AWFF…VIVG), 201–221 (GTRA…IVRG), 222–242 (WITL…MFWL), 340–360 (LVVM…GLII), 377–397 (YKAA…IVLA), and 409–429 (VFFC…YWLF).

This sequence belongs to the WzyE family. As to quaternary structure, probably part of a complex composed of WzxE, WzyE and WzzE.

It localises to the cell inner membrane. It participates in bacterial outer membrane biogenesis; enterobacterial common antigen biosynthesis. Functionally, probably involved in the polymerization of enterobacterial common antigen (ECA) trisaccharide repeat units. This is Probable ECA polymerase from Yersinia pseudotuberculosis serotype O:1b (strain IP 31758).